The sequence spans 439 residues: MSVVAIVGRPNVGKSTLFNRILGTRRAIVEDYPGVTRDRNYAQVTRYGTPFVLIDTGGFEPASQNRLLKQMREQSELAVEEADVILFVVDAKEGLTPSDDEVAGMLRRSGKPVLYVVNKVDGDSHEAAASEFYALGVDQLYTVSAEHGRGMDDLMAAVLAALPAPAKLDARSCEETRLAVIGRPNVGKSSLINRMIGVERLVANPTAGTTRDSIDTPFVYNKKSYVLIDTAGIRRKGRVQQKLEKYSVIQSLKAMERAHVVLVVIDAEEGVTEQDLTVAGYALERGRAVLLVVNKWDLVTKDHGTMKQYTEKVRHAFKFLPFAPIIFVSALSGQRVSKIMAEVEKVAIEFNRQVPTGVLNRVLEEAVLSHAPPMVQGKRLKFYYMTQTGVRPPSFVVFGNRATGVHFSYERYLSNKLREAFGFSGCPIRLKFKDRNARE.

2 EngA-type G domains span residues 2 to 166 (SVVA…PAPA) and 176 to 351 (TRLA…IEFN). GTP contacts are provided by residues 8–15 (GRPNVGKS), 55–59 (DTGGF), 118–121 (NKVD), 182–189 (GRPNVGKS), 229–233 (DTAGI), and 294–297 (NKWD). The 85-residue stretch at 352 to 436 (RQVPTGVLNR…PIRLKFKDRN (85 aa)) folds into the KH-like domain.

This sequence belongs to the TRAFAC class TrmE-Era-EngA-EngB-Septin-like GTPase superfamily. EngA (Der) GTPase family. In terms of assembly, associates with the 50S ribosomal subunit.

GTPase that plays an essential role in the late steps of ribosome biogenesis. The sequence is that of GTPase Der from Syntrophotalea carbinolica (strain DSM 2380 / NBRC 103641 / GraBd1) (Pelobacter carbinolicus).